The chain runs to 105 residues: Large ribosomal subunit protein eL33 (105 aa).

Belongs to the eukaryotic ribosomal protein eL33 family.

Its function is as follows. The protein was found to bind to both initiator and elongator tRNAs and consequently was assigned to the P site or P and A site. The protein is Large ribosomal subunit protein eL33 (rpl35a) of Dictyostelium discoideum (Social amoeba).